The sequence spans 250 residues: Lectin 1 (250 aa).

Asn-119 carries N-linked (GlcNAc...) asparagine; partial glycosylation. Glu-128 and Asp-130 together coordinate Mn(2+). Ca(2+) is bound by residues Asp-130, Tyr-132, Asn-138, and Asp-141. Mn(2+)-binding residues include Asp-141 and His-146.

This sequence belongs to the leguminous lectin family.

Functionally, di-N-acetylchitobiose specific lectin. This Laburnum alpinum (Scotch laburnum) protein is Lectin 1.